Here is a 715-residue protein sequence, read N- to C-terminus: ATP-dependent RecD2 DNA helicase (715 aa).

Positions 1 to 150 (MSAALPAEPF…STLHKMVSSW (150 aa)) are not required for helicase activity. Residues glutamine 343 and 363–367 (GTGKS) each bind ATP. 2 DNA-binding regions span residues glycine 391 and 407-414 (TVHRLLGY). Glutamine 466 is a binding site for ATP. A DNA-binding region is located at residue valine 470. Residue arginine 493 participates in ATP binding. 3 consecutive DNA-binding regions follow at residues 554–555 (RK), 596–604 (NDYNNEIFN), and 644–647 (TVHR). Residue arginine 679 participates in ATP binding.

This sequence belongs to the RecD family. RecD2 subfamily. As to quaternary structure, monomer; homodimers seem to be inactive.

The catalysed reaction is Couples ATP hydrolysis with the unwinding of duplex DNA at the replication fork by translocating in the 5'-3' direction. This creates two antiparallel DNA single strands (ssDNA). The leading ssDNA polymer is the template for DNA polymerase III holoenzyme which synthesizes a continuous strand.. The enzyme catalyses ATP + H2O = ADP + phosphate + H(+). In terms of biological role, DNA-dependent ATPase (ssDNA stimulates the ATPase better than dsDNA) and ATP-dependent 5'-3' DNA helicase. Plays a role in an antioxidant pathway. Involved in DNA damage repair and/or recombination. Appears to move along DNA in single base steps, powered by hydrolysis of 1 molecule of ATP. Has low processivity, unwinds about 15-20 base pairs/second. Short (20 bp) substrates with 5'-overhangs or forked ends are the best substrates, is much less efficient on 52 or 76 bp substrates with 5'-overhangs. The presence of single-stranded DNA-binding protein (SSB) increases unwinding 4-5 fold. Has no activity on blunt DNA or DNA with 3'-overhangs. Requires at least 10 bases of 5'-ssDNA for helicase activity. The polypeptide is ATP-dependent RecD2 DNA helicase (Deinococcus radiodurans (strain ATCC 13939 / DSM 20539 / JCM 16871 / CCUG 27074 / LMG 4051 / NBRC 15346 / NCIMB 9279 / VKM B-1422 / R1)).